The chain runs to 172 residues: Zinc finger protein 580 (172 aa).

The disordered stretch occupies residues M1 to S93. The span at M19–P30 shows a compositional bias: pro residues. K31 is covalently cross-linked (Glycyl lysine isopeptide (Lys-Gly) (interchain with G-Cter in SUMO2)). Residues K31 to G44 show a composition bias toward low complexity. Positions G75–P86 are enriched in pro residues. The C2H2-type 1 zinc-finger motif lies at Y92–H114. K118 is covalently cross-linked (Glycyl lysine isopeptide (Lys-Gly) (interchain with G-Cter in SUMO2)). 2 C2H2-type zinc fingers span residues F120–H142 and H150–H172.

In terms of assembly, interacts with SMAD2. Expressed in endothelial cells.

The protein localises to the nucleus. In terms of biological role, involved in the regulation of endothelial cell proliferation and migration. Mediates H(2)O(2)-induced leukocyte chemotaxis by elevating interleukin-8 production and may play a role in inflammation. May be involved in transcriptional regulation. The protein is Zinc finger protein 580 (ZNF580) of Homo sapiens (Human).